Consider the following 902-residue polypeptide: Phosphoenolpyruvate carboxylase (902 aa).

His-132 is a catalytic residue. A disordered region spans residues 327-346; sequence DALERPEKTAGKKSSKRTPY. Residue Lys-561 is part of the active site.

It belongs to the PEPCase type 1 family. Mg(2+) is required as a cofactor.

It carries out the reaction oxaloacetate + phosphate = phosphoenolpyruvate + hydrogencarbonate. Its function is as follows. Forms oxaloacetate, a four-carbon dicarboxylic acid source for the tricarboxylic acid cycle. This Corynebacterium diphtheriae (strain ATCC 700971 / NCTC 13129 / Biotype gravis) protein is Phosphoenolpyruvate carboxylase.